The following is a 314-amino-acid chain: Polyamine aminopropyltransferase (314 aa).

A PABS domain is found at 4–241 (GMYFFEHVTP…LNFGFLLASD (238 aa)). Glutamine 33 provides a ligand contact to S-methyl-5'-thioadenosine. Spermidine-binding residues include histidine 64 and glutamate 88. S-methyl-5'-thioadenosine is bound by residues aspartate 108 and 140 to 141 (DA). Aspartate 158 acts as the Proton acceptor in catalysis. S-methyl-5'-thioadenosine is bound at residue proline 168.

This sequence belongs to the spermidine/spermine synthase family. As to quaternary structure, homodimer or homotetramer.

It localises to the cytoplasm. It carries out the reaction S-adenosyl 3-(methylsulfanyl)propylamine + putrescine = S-methyl-5'-thioadenosine + spermidine + H(+). Its pathway is amine and polyamine biosynthesis; spermidine biosynthesis; spermidine from putrescine: step 1/1. Functionally, catalyzes the irreversible transfer of a propylamine group from the amino donor S-adenosylmethioninamine (decarboxy-AdoMet) to putrescine (1,4-diaminobutane) to yield spermidine. The chain is Polyamine aminopropyltransferase from Thermus thermophilus (strain ATCC BAA-163 / DSM 7039 / HB27).